The sequence spans 319 residues: Formimidoylglutamase (319 aa).

Positions 131, 154, 156, 158, 248, and 250 each coordinate Mn(2+).

The protein belongs to the arginase family. The cofactor is Mn(2+).

It carries out the reaction N-formimidoyl-L-glutamate + H2O = formamide + L-glutamate. It functions in the pathway amino-acid degradation; L-histidine degradation into L-glutamate; L-glutamate from N-formimidoyl-L-glutamate (hydrolase route): step 1/1. Its function is as follows. Catalyzes the conversion of N-formimidoyl-L-glutamate to L-glutamate and formamide. The polypeptide is Formimidoylglutamase (Legionella pneumophila subsp. pneumophila (strain Philadelphia 1 / ATCC 33152 / DSM 7513)).